Reading from the N-terminus, the 236-residue chain is MSVPGPPRLVVALDFPAAAPAEALAAQLDPRLCRLKVGKELFTRAGPQLVERLHARGFEVFLDLKYHDIPNTVAGACRAAADLGVWMVNVHALGGRRMLEAAAEAVAAAEGRTLITAVTVLTSHDAATLEEIGLAGPPREAVLRLAGLAQASGLDGVVCSPEEAAAIGERFGAGLLRVTPGVRPAGAALGDQQRIATPAAAVAAGCDHLVVGRPITAAEDPAAAAAAIAAEIAAAG.

Residues Asp-14, Lys-36, 63-72, Thr-122, Arg-183, Gln-192, Gly-212, and Arg-213 each bind substrate; that span reads DLKYHDIPNT. The active-site Proton donor is the Lys-65.

This sequence belongs to the OMP decarboxylase family. Type 1 subfamily. Homodimer.

The enzyme catalyses orotidine 5'-phosphate + H(+) = UMP + CO2. It participates in pyrimidine metabolism; UMP biosynthesis via de novo pathway; UMP from orotate: step 2/2. Catalyzes the decarboxylation of orotidine 5'-monophosphate (OMP) to uridine 5'-monophosphate (UMP). This chain is Orotidine 5'-phosphate decarboxylase, found in Halorhodospira halophila (strain DSM 244 / SL1) (Ectothiorhodospira halophila (strain DSM 244 / SL1)).